Here is a 113-residue protein sequence, read N- to C-terminus: MMSAAPSPDPSLDNEWKEWKTTFAKAYSLDEERHRRLMWEENKKKIEAHNADYERGKTSFYMGLNQFSDLTPEEFRTNCCGSSMCRGEMAPDLPEYEDLGKNSYLTPGRAQPE.

Tandem repeats lie at residues 15 to 17 (EWK) and 18 to 20 (EWK). A 2 X 3 AA tandem repeats of E-W-K region spans residues 15-20 (EWKEWK).

To the propeptide regions of cysteine proteases.

In terms of biological role, not known, expressed in activated T-cell. In Mus musculus (Mouse), this protein is Protein CTLA-2-beta (Ctla2b).